The following is a 386-amino-acid chain: GTPase Obg (386 aa).

Residues 1–159 (MKFVDEASIL…RELLLELMLL (159 aa)) enclose the Obg domain. The segment at 127–147 (NTRFKSSVNRTPRQKTNGTPG) is disordered. Residues 129-145 (RFKSSVNRTPRQKTNGT) show a composition bias toward polar residues. The 174-residue stretch at 160 to 333 (ADVGMLGMPN…LCWDVMTFII (174 aa)) folds into the OBG-type G domain. Residues 166–173 (GMPNAGKS), 191–195 (FTTLV), 213–216 (DIPG), 283–286 (NKID), and 314–316 (SAA) contribute to the GTP site. Mg(2+) contacts are provided by Ser-173 and Thr-193.

Belongs to the TRAFAC class OBG-HflX-like GTPase superfamily. OBG GTPase family. In terms of assembly, monomer. Mg(2+) is required as a cofactor.

The protein resides in the cytoplasm. Its function is as follows. An essential GTPase which binds GTP, GDP and possibly (p)ppGpp with moderate affinity, with high nucleotide exchange rates and a fairly low GTP hydrolysis rate. Plays a role in control of the cell cycle, stress response, ribosome biogenesis and in those bacteria that undergo differentiation, in morphogenesis control. In Escherichia coli (strain UTI89 / UPEC), this protein is GTPase Obg.